A 121-amino-acid chain; its full sequence is Small ribosomal subunit protein bS16 (121 aa).

The interval 88 to 121 is disordered; the sequence is GKAKLEKEKKAKAKTKEEENEGSKTESGSNEAES. A compositionally biased stretch (basic and acidic residues) spans 90–111; the sequence is AKLEKEKKAKAKTKEEENEGSK. A compositionally biased stretch (polar residues) spans 112-121; the sequence is TESGSNEAES.

It belongs to the bacterial ribosomal protein bS16 family.

The protein is Small ribosomal subunit protein bS16 of Prochlorococcus marinus (strain MIT 9215).